Consider the following 1194-residue polypeptide: IQ motif and SEC7 domain-containing protein 3 (1194 aa).

The stretch at 20–56 (AIVQNQQSLIHTQRQRIDELERRLDELSAENRSLWEH) forms a coiled coil. 2 disordered regions span residues 62–149 (AQPP…EKER) and 229–272 (GRPS…QQPA). The span at 63–78 (QPPPGLVPPPSAPLPA) shows a compositional bias: pro residues. Low complexity predominate over residues 79-92 (PAATAPAATAAQEP). The segment covering 122-133 (PSSRVQTPQSPH) has biased composition (polar residues). Serine 255 bears the Phosphoserine mark. The 30-residue stretch at 311–340 (SRRAACTIQTAFRQYQLSKNFEKIRNSLLE) folds into the IQ domain. Disordered stretches follow at residues 439–471 (SAGQ…QGHS) and 515–610 (PAAV…KSAK). 2 stretches are compositionally biased toward low complexity: residues 561-572 (VAEAVVEEAVAT) and 600-610 (SSSSASTKSAK). The 194-residue stretch at 646–839 (TLSTDTLRKR…VGIYERIQQK (194 aa)) folds into the SEC7 domain. The region spanning 852–985 (TKVEKSIVGM…LKESIAEVTE (134 aa)) is the PH domain. Disordered regions lie at residues 1002–1099 (KTLS…PTPP) and 1137–1175 (SSDS…HQFC). Residues 1024–1035 (AKREAMAGEKAT) are compositionally biased toward basic and acidic residues. Polar residues predominate over residues 1036–1052 (ESSGEVSIHNRLQTFQH). Composition is skewed to pro residues over residues 1064 to 1099 (APSP…PTPP) and 1159 to 1169 (PPLPPPPPPYN).

Belongs to the BRAG family. As to quaternary structure, interacts with DLG1 and DLG4. Interacts with GPHN. In terms of tissue distribution, expressed in brain. Localized to dendrites, as well as somas of neuronal cells.

It is found in the cytoplasm. The protein localises to the postsynaptic density. In terms of biological role, acts as a guanine nucleotide exchange factor (GEF) for ARF1. In Rattus norvegicus (Rat), this protein is IQ motif and SEC7 domain-containing protein 3 (Iqsec3).